The following is a 484-amino-acid chain: Sialidase-4 (484 aa).

The FRIP motif motif lies at 22 to 25; the sequence is YRVP. Residues Arg23 and Arg43 each coordinate substrate. Active-site proton acceptor residues include Asp47 and Asp48. One copy of the BNR 1 repeat lies at 127–138; sequence VASRDAGLSWGS. Positions 177 and 179 each coordinate substrate. The BNR 2 repeat unit spans residues 200-211; sequence FYSDDHGRTWRC. 2 residues coordinate substrate: Glu222 and Arg242. One copy of the BNR 3 repeat lies at 251 to 262; that stretch reads ALSTDEGTSFLP. Positions 284-357 are disordered; it reads PAPAPNRPRD…GPRPGVSGDV (74 aa). Over residues 336–345 the composition is skewed to low complexity; the sequence is RLQPRGDGPR. Arg389 is a binding site for substrate. Residue Tyr419 is the Nucleophile of the active site. Glu440 is a catalytic residue.

It belongs to the glycosyl hydrolase 33 family. N-glycosylated. Predominant form in liver. Also expressed in brain, kidney and colon. In terms of tissue distribution, highly expressed in brain and at lower levels in kidney and liver.

It localises to the cell membrane. It is found in the endoplasmic reticulum membrane. The protein localises to the microsome membrane. Its subcellular location is the mitochondrion membrane. The protein resides in the cell projection. It localises to the neuron projection. It is found in the mitochondrion inner membrane. The protein localises to the mitochondrion outer membrane. Its subcellular location is the lysosome lumen. The enzyme catalyses Hydrolysis of alpha-(2-&gt;3)-, alpha-(2-&gt;6)-, alpha-(2-&gt;8)- glycosidic linkages of terminal sialic acid residues in oligosaccharides, glycoproteins, glycolipids, colominic acid and synthetic substrates.. The catalysed reaction is a ganglioside GM3 + H2O = a beta-D-galactosyl-(1-&gt;4)-beta-D-glucosyl-(1&lt;-&gt;1)-ceramide + N-acetylneuraminate. It carries out the reaction a ganglioside GM3 (d18:1(4E)) + H2O = a beta-D-Gal-(1-&gt;4)-beta-D-Glc-(1&lt;-&gt;1)-Cer(d18:1(4E)) + N-acetylneuraminate. It catalyses the reaction a ganglioside GM2 + H2O = a ganglioside GA2 + N-acetylneuraminate. The enzyme catalyses a ganglioside GM2 (d18:1(4E)) + H2O = a ganglioside GA2 (d18:1(4E)) + N-acetylneuraminate. The catalysed reaction is a ganglioside GD1a + H2O = a ganglioside GM1 + N-acetylneuraminate. It carries out the reaction a ganglioside GD1a (d18:1(4E)) + H2O = a ganglioside GM1 (d18:1(4E)) + N-acetylneuraminate. It catalyses the reaction a ganglioside GD3 + H2O = a ganglioside GM3 + N-acetylneuraminate. The enzyme catalyses a ganglioside GD3 (d18:1(4E)) + H2O = a ganglioside GM3 (d18:1(4E)) + N-acetylneuraminate. Exo-alpha-sialidase that catalyzes the hydrolytic cleavage of the terminal sialic acid (N-acetylneuraminic acid, Neu5Ac) of a glycan moiety in the catabolism of glycolipids, glycoproteins and oligosacharides. Efficiently hydrolyzes gangliosides including alpha-(2-&gt;3)-sialylated GD1a and GM3 and alpha-(2-&gt;8)-sialylated GD3. Hydrolyzes poly-alpha-(2-&gt;8)-sialylated neural cell adhesion molecule NCAM1 likely at growth cones, suppressing neurite outgrowth in hippocampal neurons. May desialylate sialyl Lewis A and X antigens at the cell surface, down-regulating these glycan epitopes recognized by SELE/E selectin in the initiation of cell adhesion and extravasation. Has sialidase activity toward mucin, fetuin and sialyllactose. The polypeptide is Sialidase-4 (NEU4) (Homo sapiens (Human)).